The chain runs to 333 residues: Phosphate acyltransferase (333 aa).

The protein belongs to the PlsX family. Homodimer. Probably interacts with PlsY.

It is found in the cytoplasm. The enzyme catalyses a fatty acyl-[ACP] + phosphate = an acyl phosphate + holo-[ACP]. It participates in lipid metabolism; phospholipid metabolism. In terms of biological role, catalyzes the reversible formation of acyl-phosphate (acyl-PO(4)) from acyl-[acyl-carrier-protein] (acyl-ACP). This enzyme utilizes acyl-ACP as fatty acyl donor, but not acyl-CoA. This Lactobacillus helveticus (strain DPC 4571) protein is Phosphate acyltransferase.